A 991-amino-acid chain; its full sequence is Adhesion G-protein coupled receptor F3 (991 aa).

Residues 1–20 form the signal peptide; sequence MSSLALSQLLLAVTLPLLEL. At 21-694 the chain is on the extracellular side; it reads EPTFVPTAQS…ENPTLDLLSQ (674 aa). Asn-75, Asn-102, Asn-118, Asn-321, Asn-362, Asn-484, Asn-571, Asn-589, Asn-630, and Asn-660 each carry an N-linked (GlcNAc...) asparagine glycan. In terms of domain architecture, GAIN-B spans 519-684; sequence HPFSFSSANV…SILMSQHTVP (166 aa). 2 cysteine pairs are disulfide-bonded: Cys-635–Cys-666 and Cys-654–Cys-668. The tract at residues 635 to 684 is GPS; that stretch reads CVFWDHRVFQGQGGWSDEGCEVHAANASITQCICQHLTAFSILMSQHTVP. Residues 695 to 715 form a helical membrane-spanning segment; sequence VGTGASVLALLVCLAIYGLVW. Residues 716–730 lie on the Cytoplasmic side of the membrane; sequence RVVVRNKVAFFRHTT. A helical membrane pass occupies residues 731–751; sequence LFNMVICLLVADTCFLGSPFL. The Extracellular portion of the chain corresponds to 752–757; the sequence is PSGYHS. A helical membrane pass occupies residues 758-778; sequence LICLVTAFLCHFFYLATFFWM. The Cytoplasmic segment spans residues 779 to 799; the sequence is LAQALVLAHQLLFVFHQLSKH. The helical transmembrane segment at 800-820 threads the bilayer; it reads VVLSLMVMLGYLCPLGFAGVT. At 821-850 the chain is on the extracellular side; that stretch reads LGLYLPQRKYLWEGKCFLNGGGVMLYSFSE. A helical membrane pass occupies residues 851 to 871; it reads PVLAIVGVNGLVLVIAVLKLL. At 872–892 the chain is on the cytoplasmic side; sequence RPSLSEGPTVEKRQALVGVLK. A helical transmembrane segment spans residues 893 to 913; that stretch reads ALLILTPIFGLTWGLGVATLF. Residues 914-916 are Extracellular-facing; sequence DGS. A helical membrane pass occupies residues 917-937; it reads IVSHYAFSILNSLQGVFILVF. The Cytoplasmic portion of the chain corresponds to 938-991; the sequence is GCLTDKKVLEALRKRLRGSRSSNSAISMVTNETYTSEHSKERSEPASYEERMTD. Residues 964–991 are disordered; the sequence is SMVTNETYTSEHSKERSEPASYEERMTD. Residues 972–991 show a composition bias toward basic and acidic residues; it reads TSEHSKERSEPASYEERMTD.

Belongs to the G-protein coupled receptor 2 family. Adhesion G-protein coupled receptor (ADGR) subfamily. In terms of assembly, heterodimer of 2 chains generated by proteolytic processing; the large extracellular N-terminal fragment and the membrane-bound C-terminal fragment predominantly remain associated and non-covalently linked. Post-translationally, autoproteolytically processed at the GPS region of the GAIN-B domain; this cleavage modulates receptor activity. As to expression, expression is restricted to testis and circumvallate papillae.

It is found in the membrane. Its function is as follows. Orphan receptor. The sequence is that of Adhesion G-protein coupled receptor F3 (ADGRF3) from Mus musculus (Mouse).